Here is a 122-residue protein sequence, read N- to C-terminus: Large ribosomal subunit protein bL12 (122 aa).

The protein belongs to the bacterial ribosomal protein bL12 family. Homodimer. Part of the ribosomal stalk of the 50S ribosomal subunit. Forms a multimeric L10(L12)X complex, where L10 forms an elongated spine to which 2 to 4 L12 dimers bind in a sequential fashion. Binds GTP-bound translation factors.

In terms of biological role, forms part of the ribosomal stalk which helps the ribosome interact with GTP-bound translation factors. Is thus essential for accurate translation. This is Large ribosomal subunit protein bL12 from Buchnera aphidicola subsp. Schizaphis graminum (strain Sg).